Here is a 407-residue protein sequence, read N- to C-terminus: Imidazolonepropionase (407 aa).

Fe(3+) is bound by residues His-68 and His-70. Positions 68 and 70 each coordinate Zn(2+). 4-imidazolone-5-propanoate is bound by residues Arg-77, Tyr-140, and His-173. Tyr-140 contributes to the N-formimidoyl-L-glutamate binding site. His-238 provides a ligand contact to Fe(3+). His-238 contributes to the Zn(2+) binding site. Gln-241 is a binding site for 4-imidazolone-5-propanoate. Residue Asp-313 coordinates Fe(3+). Zn(2+) is bound at residue Asp-313. Residues Asn-315 and Gly-317 each contribute to the N-formimidoyl-L-glutamate site. A 4-imidazolone-5-propanoate-binding site is contributed by Thr-318.

It belongs to the metallo-dependent hydrolases superfamily. HutI family. Zn(2+) is required as a cofactor. It depends on Fe(3+) as a cofactor.

It is found in the cytoplasm. It carries out the reaction 4-imidazolone-5-propanoate + H2O = N-formimidoyl-L-glutamate. The protein operates within amino-acid degradation; L-histidine degradation into L-glutamate; N-formimidoyl-L-glutamate from L-histidine: step 3/3. Its function is as follows. Catalyzes the hydrolytic cleavage of the carbon-nitrogen bond in imidazolone-5-propanoate to yield N-formimidoyl-L-glutamate. It is the third step in the universal histidine degradation pathway. The chain is Imidazolonepropionase from Burkholderia ambifaria (strain MC40-6).